Consider the following 429-residue polypeptide: Aspartate--tRNA(Asp/Asn) ligase (429 aa).

Glu166 is a binding site for L-aspartate. An aspartate region spans residues 188-191 (QLYK). Arg210 serves as a coordination point for L-aspartate. ATP contacts are provided by residues 210–212 (RAE), 218–220 (RHL), and Glu352. Mg(2+) contacts are provided by Glu352 and Ser355. The L-aspartate site is built by Ser355 and Arg359. 400 to 403 (GIER) contributes to the ATP binding site.

Belongs to the class-II aminoacyl-tRNA synthetase family. Type 2 subfamily. In terms of assembly, homodimer. The cofactor is Mg(2+).

The protein localises to the cytoplasm. It carries out the reaction tRNA(Asx) + L-aspartate + ATP = L-aspartyl-tRNA(Asx) + AMP + diphosphate. Functionally, aspartyl-tRNA synthetase with relaxed tRNA specificity since it is able to aspartylate not only its cognate tRNA(Asp) but also tRNA(Asn). Reaction proceeds in two steps: L-aspartate is first activated by ATP to form Asp-AMP and then transferred to the acceptor end of tRNA(Asp/Asn). This Methanoculleus marisnigri (strain ATCC 35101 / DSM 1498 / JR1) protein is Aspartate--tRNA(Asp/Asn) ligase.